Here is a 143-residue protein sequence, read N- to C-terminus: Large ribosomal subunit protein uL15 (143 aa).

A disordered region spans residues 20-52 (GRGIGSGKGKTAGRGHKGQHSRAGGYHKVGFEG). Positions 30–39 (TAGRGHKGQH) are enriched in basic residues.

This sequence belongs to the universal ribosomal protein uL15 family. As to quaternary structure, part of the 50S ribosomal subunit.

Its function is as follows. Binds to the 23S rRNA. The chain is Large ribosomal subunit protein uL15 from Coxiella burnetii (strain CbuG_Q212) (Coxiella burnetii (strain Q212)).